The chain runs to 155 residues: Protein FAM162A (155 aa).

The required for proapoptotic activity stretch occupies residues 77-103 (RFKKEEEIPETISFEMLDAAKNKIRVK). Residues 102–121 (VKVSYLMIALTVAGCVYMVI) form a helical membrane-spanning segment.

This sequence belongs to the UPF0389 family. As to quaternary structure, interacts with HSP90AB1; HSP90AB1 is essential for FAM162A mitochondrial localization and pro-apoptotic activity. Interacts with VDAC2; the interaction is probably involved in inducing mitochondrial permeability transition.

The protein localises to the mitochondrion membrane. Its function is as follows. Proposed to be involved in regulation of apoptosis; the exact mechanism may differ between cell types/tissues. May be involved in hypoxia-induced cell death of transformed cells implicating cytochrome C release and caspase activation (such as CASP9) and inducing mitochondrial permeability transition. May be involved in hypoxia-induced cell death of neuronal cells probably by promoting release of AIFM1 from mitochondria to cytoplasm and its translocation to the nucleus; however, the involvement of caspases has been reported conflictingly. This chain is Protein FAM162A (Fam162a), found in Rattus norvegicus (Rat).